Reading from the N-terminus, the 301-residue chain is Light-independent protochlorophyllide reductase iron-sulfur ATP-binding protein (301 aa).

The tract at residues 1–26 (MSNGSVPVSGIGGRGDGEGSSQVHME) is disordered. ATP contacts are provided by residues 44–49 (GIGKST) and K73. S48 contacts Mg(2+). Residues C129 and C163 each contribute to the [4Fe-4S] cluster site. 214-215 (NR) serves as a coordination point for ATP.

Belongs to the NifH/BchL/ChlL family. Homodimer. Protochlorophyllide reductase is composed of three subunits; BchL, BchN and BchB. The cofactor is [4Fe-4S] cluster.

It catalyses the reaction chlorophyllide a + oxidized 2[4Fe-4S]-[ferredoxin] + 2 ADP + 2 phosphate = protochlorophyllide a + reduced 2[4Fe-4S]-[ferredoxin] + 2 ATP + 2 H2O. It functions in the pathway porphyrin-containing compound metabolism; bacteriochlorophyll biosynthesis (light-independent). In terms of biological role, component of the dark-operative protochlorophyllide reductase (DPOR) that uses Mg-ATP and reduced ferredoxin to reduce ring D of protochlorophyllide (Pchlide) to form chlorophyllide a (Chlide). This reaction is light-independent. The L component serves as a unique electron donor to the NB-component of the complex, and binds Mg-ATP. The protein is Light-independent protochlorophyllide reductase iron-sulfur ATP-binding protein of Halorhodospira halophila (strain DSM 244 / SL1) (Ectothiorhodospira halophila (strain DSM 244 / SL1)).